Consider the following 91-residue polypeptide: Small ribosomal subunit protein bS16 (91 aa).

The protein belongs to the bacterial ribosomal protein bS16 family.

In Lacticaseibacillus casei (strain BL23) (Lactobacillus casei), this protein is Small ribosomal subunit protein bS16.